The primary structure comprises 1188 residues: Probable RNA helicase armi (1188 aa).

Position 723 to 730 (723 to 730 (GPPGSGKT)) interacts with ATP. Positions 862–865 (DEAG) match the DEAG box motif.

This sequence belongs to the DNA2/NAM7 helicase family. SDE3 subfamily. In terms of assembly, forms a complex with piwi and fs(1)Yb; this interaction is required for proper piRNA loading and nuclear localization of piwi. The interaction of piwi and fs(1)Yb is likely to occur via armi. Abundant in oocytes and syncytial blastoderm. Expressed at low level throughout development, including somatic tissues. First apparent early in oogenesis, in the cytoplasm of stem cells and mitotically dividing cystoblasts. In regions 2a and 2b of the germarium, it is most concentrated in the center of the germline cysts, where the pro-oocyte is located. In stage 1 and early stage 2 egg chambers, it accumulates at the anterior of the oocyte, near the ring canals. It also extends through the ring canals forming a branched structure that links the early oocyte with adjacent nurse cells. In stage 3 cysts, it accumulates at the posterior cortex and localizes to extensions that pass through the oocyte into the nurse cells. Through stages 4 to 7, it continues to be somewhat enriched at the posterior cortex of the oocyte, but at significantly lower level. In stage 9 to 10 egg chambers, it is found throughout the cytoplasm of the oocyte and nurse cells, with slight enrichment at the oocyte cortex.

Its subcellular location is the cytoplasm. The catalysed reaction is ATP + H2O = ADP + phosphate + H(+). Its function is as follows. Probable RNA helicase required for axial polarization of the oocyte during early and mid oogenesis. Plays a central role in RNA interference (RNAi) process, a process that mediates mRNA destruction of translational repression. Required for the assembly of the RISC complex, a complex required for target RNA destruction or repression. May be required in the RISC assembly to unwind miRNAs, in the production of single-stranded miRNA from the double-stranded miRNA, a key step in RISC formation. Required both for the translational control of oskar (osk) mRNA and cytoskeletal polarization in the oocyte. Required for somatic primary piRNA biogenesis. Involved in repression of long interspersed nuclear elements (LINEs) including HeT-A, I-element and TART LINEs. This is Probable RNA helicase armi from Drosophila melanogaster (Fruit fly).